Consider the following 1366-residue polypeptide: DNA-directed RNA polymerase subunit beta' (1366 aa).

A disordered region spans residues 1–40 (MTSTSPKSRRSSGKGRKGSKKKGKQVSQIPPLSKTPPSFR). Residues 7–24 (KSRRSSGKGRKGSKKKGK) are compositionally biased toward basic residues. The span at 25-38 (QVSQIPPLSKTPPS) shows a compositional bias: polar residues. 4 residues coordinate Zn(2+): C250, C317, C324, and C327. A disordered region spans residues 1299–1366 (TAAKSTSVLD…LQEEGLLADE (68 aa)). Over residues 1353–1366 (ALEGLQEEGLLADE) the composition is skewed to low complexity.

Belongs to the RNA polymerase beta' chain family. RpoC2 subfamily. In terms of assembly, in cyanobacteria the RNAP catalytic core is composed of 2 alpha, 1 beta, 1 beta', 1 gamma and 1 omega subunit. When a sigma factor is associated with the core the holoenzyme is formed, which can initiate transcription. Zn(2+) is required as a cofactor.

It carries out the reaction RNA(n) + a ribonucleoside 5'-triphosphate = RNA(n+1) + diphosphate. In terms of biological role, DNA-dependent RNA polymerase catalyzes the transcription of DNA into RNA using the four ribonucleoside triphosphates as substrates. The sequence is that of DNA-directed RNA polymerase subunit beta' from Prochlorococcus marinus (strain MIT 9211).